The following is a 293-amino-acid chain: tRNA pseudouridine synthase B (293 aa).

Aspartate 39 functions as the Nucleophile in the catalytic mechanism.

The protein belongs to the pseudouridine synthase TruB family. Type 1 subfamily.

It catalyses the reaction uridine(55) in tRNA = pseudouridine(55) in tRNA. Its function is as follows. Responsible for synthesis of pseudouridine from uracil-55 in the psi GC loop of transfer RNAs. The polypeptide is tRNA pseudouridine synthase B (Rickettsia bellii (strain RML369-C)).